Reading from the N-terminus, the 141-residue chain is Lysozyme P (141 aa).

An N-terminal signal peptide occupies residues 1–18 (MKAFLVICALTLTAVATQ). The region spanning 20 to 141 (RTMDRCSLAR…GSLPSINSCF (122 aa)) is the C-type lysozyme domain. Cystine bridges form between cysteine 25–cysteine 140, cysteine 46–cysteine 130, cysteine 81–cysteine 97, and cysteine 93–cysteine 111. Residues glutamate 51 and aspartate 69 contribute to the active site.

The protein belongs to the glycosyl hydrolase 22 family. Salivary gland.

It catalyses the reaction Hydrolysis of (1-&gt;4)-beta-linkages between N-acetylmuramic acid and N-acetyl-D-glucosamine residues in a peptidoglycan and between N-acetyl-D-glucosamine residues in chitodextrins.. Unlikely to play an active role in the humoral immune defense. May have a function in the digestion of bacteria in the food. In Drosophila melanogaster (Fruit fly), this protein is Lysozyme P (LysP).